An 835-amino-acid chain; its full sequence is Protein translocase subunit SecA (835 aa).

ATP contacts are provided by residues Q85, 103-107 (GEGKT), and D492. Positions 788-807 (VQGEAVHPSSDGEEAKKKPV) are disordered. Positions 819, 821, 830, and 831 each coordinate Zn(2+).

Belongs to the SecA family. As to quaternary structure, monomer and homodimer. Part of the essential Sec protein translocation apparatus which comprises SecA, SecYEG and auxiliary proteins SecDF. Other proteins may also be involved. Requires Zn(2+) as cofactor.

It is found in the cell membrane. It localises to the cytoplasm. The catalysed reaction is ATP + H2O + cellular proteinSide 1 = ADP + phosphate + cellular proteinSide 2.. Part of the Sec protein translocase complex. Interacts with the SecYEG preprotein conducting channel. Has a central role in coupling the hydrolysis of ATP to the transfer of proteins into and across the cell membrane, serving as an ATP-driven molecular motor driving the stepwise translocation of polypeptide chains across the membrane. This Bacillus cereus (strain ATCC 14579 / DSM 31 / CCUG 7414 / JCM 2152 / NBRC 15305 / NCIMB 9373 / NCTC 2599 / NRRL B-3711) protein is Protein translocase subunit SecA.